The following is an 875-amino-acid chain: SPbeta prophage-derived uncharacterized protein YomG (875 aa).

Residues 351 to 381 are a coiled coil; the sequence is AKKAEISRINSQITNISQEIEKLKDRLSMDK. Positions 537–648 constitute a Fibronectin type-III domain; sequence PVANPTILNN…SIDSSGRILS (112 aa).

The chain is SPbeta prophage-derived uncharacterized protein YomG (yomG) from Bacillus subtilis (strain 168).